The chain runs to 472 residues: MTSDFKVIIVGGSVAGLSLAHCLEKIGVSFMVLEKGNQIAPQLGASIGILPNGGRILDQLGIFHSIEDEIEPLESAMMRYPDGFSFKSQYPQALHTSFGYPVAFLERQRFLQILYDKLKSKDCVFTNKRVVSIASGQDKVTAKTSDGAKYLADIVIGADGVHSIVRSEIWRHLKENSQISVLEAPNASIKHDYSCIYGISLNVPQIILGIQLNCLDDGVSIHLFTGKQSKLFWFVIIKTPQASFAKVEIDNTHTARCICEGLRTKKVSDTLCFEDVWSRCTIFKMTPLEEGVFKHWNYGRLACIGDAIRKMAPNNGQGANMAIEDACSLANILQKKISHGSIRDQDINSMFQEFSMAQRARTESVCAQSEFLVRMHANQGIGRRLLGRYLIPFLYDAPAGLSGFSISGATRIEFIDLPTRSLRGAWGKSWRGSWEFILQSLVYLRPKFRIVYALYLVAAAAFILYCLSSLFP.

The helical transmembrane segment at Val7–Gly27 threads the bilayer. Residues Glu34, Gly48, and Arg107 each coordinate FAD. N-linked (GlcNAc...) asparagine glycosylation is present at Asn186. 2 residues coordinate FAD: Asp306 and Ala319. The chain crosses the membrane as a helical span at residues Ile450–Leu470.

This sequence belongs to the paxM FAD-dependent monooxygenase family. It depends on FAD as a cofactor.

The protein resides in the membrane. It participates in secondary metabolite biosynthesis. Functionally, FAD-dependent monooxygenase; part of the gene cluster that mediates the biosynthesis of lolitrems, indole-diterpene mycotoxins that are potent tremorgens in mammals, and are synthesized by clavicipitaceous fungal endophytes in association with their grass hosts. The geranylgeranyl diphosphate (GGPP) synthase ltmG is proposed to catalyze the first step in lolitremB biosynthesis. LtmG catalyzes a series of iterative condensations of isopentenyl diphosphate (IPP) with dimethylallyl diphosphate (DMAPP), geranyl diphosphate (GPP), and farnesyl diphosphate (FPP), to form GGPP. GGPP then condenses with indole-3-glycerol phosphate to form 3-geranylgeranylindole, an acyclic intermediate, to be incorporated into paxilline. Either ltmG or ltmC could be responsible for this step, as both are putative prenyl transferases. The FAD-dependent monooxygenase ltmM then catalyzes the epoxidation of the two terminal alkenes of the geranylgeranyl moiety, which is subsequently cyclized by ltmB, to paspaline. The cytochrome P450 monooxygenases ltmQ and ltmP can sequentially oxidize paspaline to terpendole E and terpendole F. Alternatively, ltmP converts paspaline to an intermediate which is oxidized by ltmQ to terpendole F. LtmF, ltmK, ltmE and ltmJ appear to be unique to the epichloe endophytes. The prenyltransferase ltmF is involved in the 27-hydroxyl-O-prenylation. The cytochrome P450 monooxygenase ltmK is required for the oxidative acetal ring formation. The multi-functional prenyltransferase ltmE is required for C20- and C21-prenylations of the indole ring of paspalanes and acts together with the cytochrome P450 monooxygenase ltmJ to yield lolitremanes by multiple oxidations and ring closures. The stereoisomer pairs of lolitriol and lolitrem N or lolitrem B and lolitrem F may be attributed to variations in the way in which ring closure can occur under the action of ltmJ. While the major product of this pathway is lolitrem B, the prenyl transferases and cytochrome P450 monooxygenases identified in this pathway have a remarkable versatility in their regio- and stereo-specificities to generate a diverse range of metabolites that are products of a metabolic grid rather than a linear pathway. This is FAD-dependent monooxygenase ltmM (ltmM) from Epichloe festucae var. lolii (Neotyphodium lolii).